The chain runs to 467 residues: Plasma alpha-L-fucosidase (467 aa).

The N-terminal stretch at 1 to 28 is a signal peptide; it reads MRPQELPRLAFPLLLLLLLLLPPPPCPA. Asn-171 and Asn-239 each carry an N-linked (GlcNAc...) asparagine glycan. Residue Ser-301 is modified to Phosphoserine; by FAM20C. N-linked (GlcNAc...) asparagine glycosylation occurs at Asn-377.

The protein belongs to the glycosyl hydrolase 29 family. As to quaternary structure, homotetramer.

It is found in the secreted. It carries out the reaction an alpha-L-fucoside + H2O = L-fucose + an alcohol. Alpha-L-fucosidase is responsible for hydrolyzing the alpha-1,6-linked fucose joined to the reducing-end N-acetylglucosamine of the carbohydrate moieties of glycoproteins. This chain is Plasma alpha-L-fucosidase (FUCA2), found in Homo sapiens (Human).